The chain runs to 212 residues: Thiamine-phosphate synthase (212 aa).

4-amino-2-methyl-5-(diphosphooxymethyl)pyrimidine-binding positions include 40-44 and Asn-75; that span reads QFREK. Residues Asp-76 and Asp-95 each coordinate Mg(2+). Ser-113 contributes to the 4-amino-2-methyl-5-(diphosphooxymethyl)pyrimidine binding site. 139–141 contributes to the 2-[(2R,5Z)-2-carboxy-4-methylthiazol-5(2H)-ylidene]ethyl phosphate binding site; that stretch reads TIS. Residue Lys-142 coordinates 4-amino-2-methyl-5-(diphosphooxymethyl)pyrimidine. 2-[(2R,5Z)-2-carboxy-4-methylthiazol-5(2H)-ylidene]ethyl phosphate-binding positions include Gly-171 and 191–192; that span reads IS.

Belongs to the thiamine-phosphate synthase family. The cofactor is Mg(2+).

The enzyme catalyses 2-[(2R,5Z)-2-carboxy-4-methylthiazol-5(2H)-ylidene]ethyl phosphate + 4-amino-2-methyl-5-(diphosphooxymethyl)pyrimidine + 2 H(+) = thiamine phosphate + CO2 + diphosphate. It catalyses the reaction 2-(2-carboxy-4-methylthiazol-5-yl)ethyl phosphate + 4-amino-2-methyl-5-(diphosphooxymethyl)pyrimidine + 2 H(+) = thiamine phosphate + CO2 + diphosphate. It carries out the reaction 4-methyl-5-(2-phosphooxyethyl)-thiazole + 4-amino-2-methyl-5-(diphosphooxymethyl)pyrimidine + H(+) = thiamine phosphate + diphosphate. It functions in the pathway cofactor biosynthesis; thiamine diphosphate biosynthesis; thiamine phosphate from 4-amino-2-methyl-5-diphosphomethylpyrimidine and 4-methyl-5-(2-phosphoethyl)-thiazole: step 1/1. Its function is as follows. Condenses 4-methyl-5-(beta-hydroxyethyl)thiazole monophosphate (THZ-P) and 2-methyl-4-amino-5-hydroxymethyl pyrimidine pyrophosphate (HMP-PP) to form thiamine monophosphate (TMP). In Staphylococcus haemolyticus (strain JCSC1435), this protein is Thiamine-phosphate synthase.